Here is a 549-residue protein sequence, read N- to C-terminus: Chaperonin GroEL (549 aa).

Residues 29–32 (TLGP), Lys50, 86–90 (DGTTT), Gly414, 477–479 (NAL), and Asp493 each bind ATP.

This sequence belongs to the chaperonin (HSP60) family. In terms of assembly, forms a cylinder of 14 subunits composed of two heptameric rings stacked back-to-back. Interacts with the co-chaperonin GroES.

The protein resides in the cytoplasm. It catalyses the reaction ATP + H2O + a folded polypeptide = ADP + phosphate + an unfolded polypeptide.. Its function is as follows. Together with its co-chaperonin GroES, plays an essential role in assisting protein folding. The GroEL-GroES system forms a nano-cage that allows encapsulation of the non-native substrate proteins and provides a physical environment optimized to promote and accelerate protein folding. The sequence is that of Chaperonin GroEL from Leptospira biflexa serovar Patoc (strain Patoc 1 / Ames).